The following is a 340-amino-acid chain: Anthranilate phosphoribosyltransferase (340 aa).

5-phospho-alpha-D-ribose 1-diphosphate is bound by residues Gly-78, 81 to 82, Thr-86, 88 to 91, 106 to 114, and Ser-118; these read GD, NIST, and KHGNRSVSS. An anthranilate-binding site is contributed by Gly-78. Mg(2+) is bound at residue Ser-90. Residue Asn-109 participates in anthranilate binding. Arg-164 contributes to the anthranilate binding site. Mg(2+) is bound by residues Asp-223 and Glu-224.

This sequence belongs to the anthranilate phosphoribosyltransferase family. Homodimer. Mg(2+) serves as cofactor.

It carries out the reaction N-(5-phospho-beta-D-ribosyl)anthranilate + diphosphate = 5-phospho-alpha-D-ribose 1-diphosphate + anthranilate. It participates in amino-acid biosynthesis; L-tryptophan biosynthesis; L-tryptophan from chorismate: step 2/5. Functionally, catalyzes the transfer of the phosphoribosyl group of 5-phosphorylribose-1-pyrophosphate (PRPP) to anthranilate to yield N-(5'-phosphoribosyl)-anthranilate (PRA). The chain is Anthranilate phosphoribosyltransferase from Bacillus pumilus (strain SAFR-032).